The sequence spans 284 residues: Bifunctional protein FolD (284 aa).

Residues 166-168 and isoleucine 232 each bind NADP(+); that span reads GAS.

The protein belongs to the tetrahydrofolate dehydrogenase/cyclohydrolase family. In terms of assembly, homodimer.

It carries out the reaction (6R)-5,10-methylene-5,6,7,8-tetrahydrofolate + NADP(+) = (6R)-5,10-methenyltetrahydrofolate + NADPH. It catalyses the reaction (6R)-5,10-methenyltetrahydrofolate + H2O = (6R)-10-formyltetrahydrofolate + H(+). It functions in the pathway one-carbon metabolism; tetrahydrofolate interconversion. Its function is as follows. Catalyzes the oxidation of 5,10-methylenetetrahydrofolate to 5,10-methenyltetrahydrofolate and then the hydrolysis of 5,10-methenyltetrahydrofolate to 10-formyltetrahydrofolate. The sequence is that of Bifunctional protein FolD from Alteromonas mediterranea (strain DSM 17117 / CIP 110805 / LMG 28347 / Deep ecotype).